The primary structure comprises 280 residues: Chaperone for lacto-N-biosidase (280 aa).

Positions 1–37 (MPRRHRFAAAIAAVAVAAVLLVTLTVAVVTHGDGAFA) are cleaved as a signal peptide.

As to quaternary structure, homodimer.

Its subcellular location is the secreted. Chaperone required for active expression of the lacto-N-biosidase LnbX. In Bifidobacterium longum subsp. longum (strain ATCC 15707 / DSM 20219 / JCM 1217 / NCTC 11818 / E194b), this protein is Chaperone for lacto-N-biosidase.